We begin with the raw amino-acid sequence, 395 residues long: F-box/kelch-repeat protein At4g39570 (395 aa).

Over residues 1-25 (MSSPERKRKRVTSTKNPSVKKKKKI) the composition is skewed to basic residues. The tract at residues 1-29 (MSSPERKRKRVTSTKNPSVKKKKKISPVP) is disordered. The region spanning 29 to 75 (PTPIPSLPDDLLVSIFARVSRLYYPILSLVSKSFRSLLRSPELYETR) is the F-box domain. Kelch repeat units follow at residues 150–197 (DIYF…VIDG) and 198–246 (KIYV…RSAY).

This Arabidopsis thaliana (Mouse-ear cress) protein is F-box/kelch-repeat protein At4g39570.